We begin with the raw amino-acid sequence, 469 residues long: 3-isopropylmalate dehydratase large subunit (469 aa).

[4Fe-4S] cluster-binding residues include C347, C410, and C413.

Belongs to the aconitase/IPM isomerase family. LeuC type 1 subfamily. As to quaternary structure, heterodimer of LeuC and LeuD. It depends on [4Fe-4S] cluster as a cofactor.

It carries out the reaction (2R,3S)-3-isopropylmalate = (2S)-2-isopropylmalate. The protein operates within amino-acid biosynthesis; L-leucine biosynthesis; L-leucine from 3-methyl-2-oxobutanoate: step 2/4. In terms of biological role, catalyzes the isomerization between 2-isopropylmalate and 3-isopropylmalate, via the formation of 2-isopropylmaleate. The chain is 3-isopropylmalate dehydratase large subunit from Burkholderia lata (strain ATCC 17760 / DSM 23089 / LMG 22485 / NCIMB 9086 / R18194 / 383).